A 232-amino-acid chain; its full sequence is Cilia- and flagella-associated protein 95 (232 aa).

Residues 1 to 96 (MDSSDSSCQE…PVWISETREK (96 aa)) lie on the Extracellular side of the membrane. N-linked (GlcNAc...) asparagine glycosylation is present at Asn75. The helical transmembrane segment at 97 to 115 (MAQVCLNTKLAKIKSKALL) threads the bilayer. Topologically, residues 116 to 232 (NEETMNSGII…TGGPIAPFLK (117 aa)) are cytoplasmic. A mn region spans residues 153–163 (LTTYAEEYAPP).

As to quaternary structure, microtubule inner protein component of sperm flagellar doublet microtubules. Interacts with MYH9. Interacts with MYH10. As to expression, expressed in trachea multiciliated cells.

It is found in the cytoplasm. The protein resides in the cytoskeleton. It localises to the cilium axoneme. The protein localises to the flagellum axoneme. Its subcellular location is the cell membrane. Functionally, microtubule inner protein (MIP) part of the dynein-decorated doublet microtubules (DMTs) in cilia axoneme, which is required for motile cilia beating. This is Cilia- and flagella-associated protein 95 from Bos taurus (Bovine).